Reading from the N-terminus, the 336-residue chain is Coproporphyrin III ferrochelatase (336 aa).

Positions 52 and 116 each coordinate Fe-coproporphyrin III. Fe(2+)-binding residues include histidine 172 and glutamate 255.

It belongs to the ferrochelatase family.

The protein resides in the cytoplasm. It catalyses the reaction Fe-coproporphyrin III + 2 H(+) = coproporphyrin III + Fe(2+). Its pathway is porphyrin-containing compound metabolism; protoheme biosynthesis. Functionally, involved in coproporphyrin-dependent heme b biosynthesis. Catalyzes the insertion of ferrous iron into coproporphyrin III to form Fe-coproporphyrin III. The protein is Coproporphyrin III ferrochelatase of Mycobacterium avium (strain 104).